We begin with the raw amino-acid sequence, 352 residues long: Histidine biosynthesis bifunctional protein HisB (352 aa).

The histidinol-phosphatase stretch occupies residues 1 to 164 (MSQKILFIDR…EIENEILSSF (164 aa)). Asp9 (nucleophile) is an active-site residue. Positions 9 and 11 each coordinate Mg(2+). The active-site Proton donor is the Asp11. The Zn(2+) site is built by Cys93, His95, Cys101, and Cys103. Residue Asp130 participates in Mg(2+) binding. Residues 165-352 (RSASYQRTTK…ENLASSKGVI (188 aa)) are imidazoleglycerol-phosphate dehydratase.

The protein in the N-terminal section; belongs to the histidinol-phosphatase family. It in the C-terminal section; belongs to the imidazoleglycerol-phosphate dehydratase family. It depends on Mg(2+) as a cofactor. The cofactor is Zn(2+).

It is found in the cytoplasm. It carries out the reaction D-erythro-1-(imidazol-4-yl)glycerol 3-phosphate = 3-(imidazol-4-yl)-2-oxopropyl phosphate + H2O. The catalysed reaction is L-histidinol phosphate + H2O = L-histidinol + phosphate. Its pathway is amino-acid biosynthesis; L-histidine biosynthesis; L-histidine from 5-phospho-alpha-D-ribose 1-diphosphate: step 6/9. The protein operates within amino-acid biosynthesis; L-histidine biosynthesis; L-histidine from 5-phospho-alpha-D-ribose 1-diphosphate: step 8/9. This chain is Histidine biosynthesis bifunctional protein HisB, found in Campylobacter jejuni subsp. jejuni serotype O:23/36 (strain 81-176).